A 236-amino-acid chain; its full sequence is Oligogalacturonate-specific porin KdgM (236 aa).

The first 20 residues, 1 to 20 (MKIKLLTLAVASLVSVNALA), serve as a signal peptide directing secretion.

This sequence belongs to the oligogalacturonate-specific porin KdgM (TC 1.B.35) family. Monomer.

The protein resides in the cell outer membrane. In terms of biological role, porin specific for oligogalacturonides. Also required for full virulence. The sequence is that of Oligogalacturonate-specific porin KdgM (kdgM) from Dickeya dadantii (strain 3937) (Erwinia chrysanthemi (strain 3937)).